A 349-amino-acid chain; its full sequence is Small ribosomal subunit biogenesis GTPase RsgA 2 (349 aa).

The region spanning 97–252 (AEQLIATNVD…IIDTPGMREL (156 aa)) is the CP-type G domain. GTP is bound by residues 142–145 (TKAD) and 194–202 (GSSGVGKST). Cys275, Cys280, His282, and Cys288 together coordinate Zn(2+).

It belongs to the TRAFAC class YlqF/YawG GTPase family. RsgA subfamily. In terms of assembly, monomer. Associates with 30S ribosomal subunit, binds 16S rRNA. Zn(2+) serves as cofactor.

The protein localises to the cytoplasm. In terms of biological role, one of several proteins that assist in the late maturation steps of the functional core of the 30S ribosomal subunit. Helps release RbfA from mature subunits. May play a role in the assembly of ribosomal proteins into the subunit. Circularly permuted GTPase that catalyzes slow GTP hydrolysis, GTPase activity is stimulated by the 30S ribosomal subunit. This is Small ribosomal subunit biogenesis GTPase RsgA 2 from Vibrio vulnificus (strain CMCP6).